The sequence spans 206 residues: Histidine biosynthesis bifunctional protein HisIE (206 aa).

A phosphoribosyl-AMP cyclohydrolase region spans residues 1–117 (MGSNEVATGD…SCFPSAPGQF (117 aa)). Positions 118-206 (LGSLDALVAE…AAALLESRHQ (89 aa)) are phosphoribosyl-ATP pyrophosphohydrolase.

It in the N-terminal section; belongs to the PRA-CH family. The protein in the C-terminal section; belongs to the PRA-PH family.

The protein resides in the cytoplasm. It carries out the reaction 1-(5-phospho-beta-D-ribosyl)-ATP + H2O = 1-(5-phospho-beta-D-ribosyl)-5'-AMP + diphosphate + H(+). The catalysed reaction is 1-(5-phospho-beta-D-ribosyl)-5'-AMP + H2O = 1-(5-phospho-beta-D-ribosyl)-5-[(5-phospho-beta-D-ribosylamino)methylideneamino]imidazole-4-carboxamide. It functions in the pathway amino-acid biosynthesis; L-histidine biosynthesis; L-histidine from 5-phospho-alpha-D-ribose 1-diphosphate: step 2/9. It participates in amino-acid biosynthesis; L-histidine biosynthesis; L-histidine from 5-phospho-alpha-D-ribose 1-diphosphate: step 3/9. The chain is Histidine biosynthesis bifunctional protein HisIE from Xanthomonas axonopodis pv. citri (strain 306).